A 504-amino-acid chain; its full sequence is Dolichol kinase sec59 (504 aa).

Residues 1-55 (MYIMSKKCYDTSEKIDREQECVEVNYQHRNFESILEIFSVLFIPFLCNSGKKFLQ) are Cytoplasmic-facing. Residues 56–76 (ISNASFFLPACFYLLGSSSII) form a helical membrane-spanning segment. Position 77 (glutamine 77) is a topological domain, lumenal. The chain crosses the membrane as a helical span at residues 78–98 (LYEPLLWLSSFPFCILYVGFG). Residues 99 to 157 (ENSVLYHEMYTVCLYNALLSLTQRWKWLSIVLDGLGNSSVNLKLHETVILAFLEITQNS) lie on the Cytoplasmic side of the membrane. Residues 158–178 (FTFIEGILICTGLTGLCFATF) traverse the membrane as a helical segment. Residues 179-187 (SYEVSPVVS) are Lumenal-facing. The chain crosses the membrane as a helical span at residues 188–208 (VLSGVLLISLPTLILLNLCIL). Residues 209–215 (KLAAKLH) lie on the Cytoplasmic side of the membrane. The chain crosses the membrane as a helical span at residues 216 to 236 (LSALFTTCLIYFFSALLVFLV). At 237–263 (SRSWVAGQLGQAPEVWLFNQIFSHRNS) the chain is on the lumenal side. The chain crosses the membrane as a helical span at residues 264–284 (LTRIKIIIWWIICLGCFIFIL). Residues 285–325 (LRSNRNNPLGKYFTTEDEVLNFRRKTYHALVVFLFLPVCCL) lie on the Cytoplasmic side of the membrane. A helical transmembrane segment spans residues 326 to 347 (DPHFLHLSFSGVLFIFLFVEGI). Topologically, residues 348 to 373 (RILRLKPFGKMIHEFLWEYTDNRDHK) are lumenal. The helical transmembrane segment at 374-394 (GPLIISHIYLLIGCAIPIWLS) threads the bilayer. Residues 395-403 (NALKGPVAS) lie on the Cytoplasmic side of the membrane. Residues 404–424 (VELLVGVLCLGCGDSMASIIG) form a helical membrane-spanning segment. The Lumenal portion of the chain corresponds to 425 to 440 (KRFGKHRISKTNKSIE). The helical transmembrane segment at 441 to 461 (GVFAFSISVFLVLHLTQAFHV) threads the bilayer. Position 462 (cysteine 462) is a topological domain, cytoplasmic. The chain crosses the membrane as a helical span at residues 463–483 (PSVTFWKTLFMSLCTAILEGV). Residues 484–504 (STENDNLILPMYMWVLYQALD) are Lumenal-facing.

The protein belongs to the polyprenol kinase family.

The protein resides in the endoplasmic reticulum membrane. It catalyses the reaction a di-trans,poly-cis-dolichol + CTP = a di-trans,poly-cis-dolichyl phosphate + CDP + H(+). It participates in protein modification; protein glycosylation. In terms of biological role, catalyzes CTP-mediated phosphorylation of dolichol, the terminal step in de novo dolichyl monophosphate (Dol-P) biosynthesis. Dol-P is a lipid carrier essential for the synthesis of N-linked and O-linked oligosaccharides and for GPI anchors. The sequence is that of Dolichol kinase sec59 from Schizosaccharomyces pombe (strain 972 / ATCC 24843) (Fission yeast).